The primary structure comprises 122 residues: Small ribosomal subunit protein uS13 (122 aa).

Residues 97 to 114 (PVRGQRTHTNAKTRKGKS) are compositionally biased toward basic residues. Positions 97-122 (PVRGQRTHTNAKTRKGKSRLPIAGKE) are disordered.

The protein belongs to the universal ribosomal protein uS13 family. Part of the 30S ribosomal subunit. Forms a loose heterodimer with protein S19. Forms two bridges to the 50S subunit in the 70S ribosome.

Its function is as follows. Located at the top of the head of the 30S subunit, it contacts several helices of the 16S rRNA. In the 70S ribosome it contacts the 23S rRNA (bridge B1a) and protein L5 of the 50S subunit (bridge B1b), connecting the 2 subunits; these bridges are implicated in subunit movement. Contacts the tRNAs in the A and P-sites. The sequence is that of Small ribosomal subunit protein uS13 from Wolbachia sp. subsp. Brugia malayi (strain TRS).